The primary structure comprises 203 residues: Ras-related protein Rab-7a (203 aa).

GTP is bound by residues Gly-15–Thr-22, Ser-34–Thr-40, Asp-63–Gln-67, Asn-125–Asp-128, and Ala-157–Lys-158. Residues Tyr-37–Phe-45 carry the Effector region motif. S-geranylgeranyl cysteine attachment occurs at residues Cys-202 and Cys-203.

Belongs to the small GTPase superfamily. Rab family.

The protein localises to the late endosome membrane. It is found in the lysosome membrane. The protein resides in the cytoplasmic vesicle. Its subcellular location is the autophagosome membrane. It localises to the lipid droplet. It catalyses the reaction GTP + H2O = GDP + phosphate + H(+). In terms of biological role, small GTPase which cycles between active GTP-bound and inactive GDP-bound states. In its active state, binds to a variety of effector proteins playing a key role in the regulation of endo-lysosomal trafficking. Governs early-to-late endosomal maturation, microtubule minus-end as well as plus-end directed endosomal migration and positioning, and endosome-lysosome transport through different protein-protein interaction cascades. Involved in lipophagy, a cytosolic lipase-independent autophagic pathway. The polypeptide is Ras-related protein Rab-7a (rab7A) (Dictyostelium discoideum (Social amoeba)).